The chain runs to 181 residues: Cell division protein ZapC (181 aa).

Belongs to the ZapC family. Interacts directly with FtsZ.

It is found in the cytoplasm. In terms of biological role, contributes to the efficiency of the cell division process by stabilizing the polymeric form of the cell division protein FtsZ. Acts by promoting interactions between FtsZ protofilaments and suppressing the GTPase activity of FtsZ. The sequence is that of Cell division protein ZapC from Shewanella woodyi (strain ATCC 51908 / MS32).